Consider the following 148-residue polypeptide: MFGSARILSDVTLRLRQNLSVHGVRVQNINIGGGVGGEIPDNKRLVYALQNLHGIGRSKAQHIVAELGVENKFVKDLSKRELYSIRELLSKYLIGNDLKKCVERDVGRLVGIQCYRGIRHVDSLPCRGQRTHTNARTRRSRKTFSGSR.

Residues 1–27 (MFGSARILSDVTLRLRQNLSVHGVRVQ) constitute a mitochondrion transit peptide. Residues 129-142 (QRTHTNARTRRSRK) are compositionally biased toward basic residues. Residues 129 to 148 (QRTHTNARTRRSRKTFSGSR) are disordered.

It belongs to the universal ribosomal protein uS13 family. Part of the small ribosomal subunit.

It localises to the mitochondrion. In terms of biological role, located at the top of the head of the small subunit, it contacts several helices of the 18S rRNA. In Glycine max (Soybean), this protein is Small ribosomal subunit protein uS13m (RSP13).